We begin with the raw amino-acid sequence, 396 residues long: MSKYKRIFTIVIDSLGIGAMNDSEKYGDVNVDTLGHIAESVDTFNIPNLQKMGIANLHPIKHVAPVENPIGYQAKMAEASVGKDTMTGHWEMMGLHITKPFKTFTDTGFPQELLDELTARTGHKIVGNKSASGTEILDELGEHQIATGDMIVYTSADSVLQICGQEETFGLEELYRCCEIARELTLKDEWKVGRIIARPYLGTKKGEFKRTSNRHDYALKPYGRTVLNELKDNNFDVISVGKIKDIFDGEGITEGNKSKSSVHGMEQTLEIMDRDFTGFCFINLVDFDALWGHRRNPQGYAEELEKFDVNLGKVLEKLHEDDLLIITADHGNDPTYTGTDHTREYVPFLAYSPSMKGHGQLETPKTFATIGATIADNFGLKMPEGTIGESVLNKLV.

Mn(2+) is bound by residues D13, D288, H293, D329, H330, and H341.

It belongs to the phosphopentomutase family. Requires Mn(2+) as cofactor.

The protein localises to the cytoplasm. It carries out the reaction 2-deoxy-alpha-D-ribose 1-phosphate = 2-deoxy-D-ribose 5-phosphate. It catalyses the reaction alpha-D-ribose 1-phosphate = D-ribose 5-phosphate. Its pathway is carbohydrate degradation; 2-deoxy-D-ribose 1-phosphate degradation; D-glyceraldehyde 3-phosphate and acetaldehyde from 2-deoxy-alpha-D-ribose 1-phosphate: step 1/2. Its function is as follows. Isomerase that catalyzes the conversion of deoxy-ribose 1-phosphate (dRib-1-P) and ribose 1-phosphate (Rib-1-P) to deoxy-ribose 5-phosphate (dRib-5-P) and ribose 5-phosphate (Rib-5-P), respectively. The sequence is that of Phosphopentomutase from Clostridium perfringens (strain SM101 / Type A).